A 227-amino-acid chain; its full sequence is Claudin-15 (227 aa).

Residue Met-1 is a topological domain, cytoplasmic. Residues Ser-2–Leu-24 form a helical membrane-spanning segment. Residues Ser-25 to Tyr-74 are Extracellular-facing. Cys-52 and Cys-62 are disulfide-bonded. A helical membrane pass occupies residues Val-75–Gly-99. The Cytoplasmic segment spans residues Leu-100–Lys-115. Ser-111 carries the post-translational modification Phosphoserine. Residues Leu-116–Val-140 form a helical membrane-spanning segment. Topologically, residues Asn-141–Gly-159 are extracellular. Residues Phe-146–Phe-147 form an important for the formation of tight-junction strand-like structures region. Residues Pro-160 to Thr-182 form a helical membrane-spanning segment. The Cytoplasmic portion of the chain corresponds to Cys-183–Val-227. Residues Ser-211, Ser-214, and Ser-217 each carry the phosphoserine modification.

This sequence belongs to the claudin family. In terms of assembly, can form homo- and heteropolymeric tight junction strands. In terms of processing, palmitoylated when heterogeneously expressed in S.frugiperda cells. In terms of tissue distribution, detected in duodenum, jejunum and ileum. Detected on intestinal villi and crypts (at protein level). Ubiquitous. Detected in small and large intestine, colon, jejunum, heart, kidney and lung.

It is found in the cell junction. Its subcellular location is the tight junction. The protein resides in the cell membrane. It carries out the reaction Na(+)(in) = Na(+)(out). It catalyses the reaction K(+)(in) = K(+)(out). The catalysed reaction is Cs(+)(in) = Cs(+)(out). The enzyme catalyses Rb(+)(in) = Rb(+)(out). It carries out the reaction Li(+)(in) = Li(+)(out). It catalyses the reaction NH4(+)(in) = NH4(+)(out). The catalysed reaction is methylamine(out) = methylamine(in). The enzyme catalyses H2O(in) = H2O(out). In terms of biological role, forms paracellular channels: polymerizes in tight junction strands with cation- and water-selective channels through the strands, conveying epithelial permeability in a process known as paracellular tight junction permeability. In intestinal epithelium, allows for sodium and water fluxes from the peritoneal side to the lumen of the intestine to regulate nutrient absorption and intestinal morphogenesis. The protein is Claudin-15 of Mus musculus (Mouse).